The primary structure comprises 140 residues: Methylglyoxal synthase (140 aa).

One can recognise an MGS-like domain in the interval 1–140 (MKIALIAHDK…RGRKGEINGL (140 aa)). Substrate-binding positions include His8, Lys12, 34–37 (TGTT), and 54–55 (SG). Asp60 acts as the Proton donor/acceptor in catalysis. A substrate-binding site is contributed by His87.

Belongs to the methylglyoxal synthase family.

The catalysed reaction is dihydroxyacetone phosphate = methylglyoxal + phosphate. Its function is as follows. Catalyzes the formation of methylglyoxal from dihydroxyacetone phosphate. The protein is Methylglyoxal synthase of Geobacillus sp. (strain WCH70).